The sequence spans 89 residues: Small ribosomal subunit protein uS15 (89 aa).

Residues 1–21 show a composition bias toward basic and acidic residues; that stretch reads MSITPERKQEMIKDYATKEGD. Positions 1–23 are disordered; that stretch reads MSITPERKQEMIKDYATKEGDTG.

Belongs to the universal ribosomal protein uS15 family. In terms of assembly, part of the 30S ribosomal subunit. Forms a bridge to the 50S subunit in the 70S ribosome, contacting the 23S rRNA.

In terms of biological role, one of the primary rRNA binding proteins, it binds directly to 16S rRNA where it helps nucleate assembly of the platform of the 30S subunit by binding and bridging several RNA helices of the 16S rRNA. Functionally, forms an intersubunit bridge (bridge B4) with the 23S rRNA of the 50S subunit in the ribosome. The protein is Small ribosomal subunit protein uS15 of Rhodospirillum rubrum (strain ATCC 11170 / ATH 1.1.1 / DSM 467 / LMG 4362 / NCIMB 8255 / S1).